The primary structure comprises 127 residues: Apolipoprotein C-IV (127 aa).

The signal sequence occupies residues 1-27 (MSLLRNRLQDLPALCLCVLVLACIGAC). Asn63 carries an N-linked (GlcNAc...) asparagine glycan.

The protein belongs to the apolipoprotein C4 family.

It localises to the secreted. Its function is as follows. May participate in lipoprotein metabolism. This is Apolipoprotein C-IV (APOC4) from Colobus guereza (Mantled guereza).